The sequence spans 476 residues: Glutamate--tRNA ligase (476 aa).

The 'HIGH' region motif lies at 9–19 (PSPTGLFHIGT). A 'KMSKS' region motif is present at residues 248–252 (KLSKR). K251 provides a ligand contact to ATP.

This sequence belongs to the class-I aminoacyl-tRNA synthetase family. Glutamate--tRNA ligase type 1 subfamily. Monomer.

It is found in the cytoplasm. The catalysed reaction is tRNA(Glu) + L-glutamate + ATP = L-glutamyl-tRNA(Glu) + AMP + diphosphate. Catalyzes the attachment of glutamate to tRNA(Glu) in a two-step reaction: glutamate is first activated by ATP to form Glu-AMP and then transferred to the acceptor end of tRNA(Glu). This is Glutamate--tRNA ligase from Prochlorococcus marinus (strain MIT 9301).